A 230-amino-acid chain; its full sequence is MAHPTQLGFQDAASPVMEELLHFHDHALMIVFLISALVLYVIITTVSTKLTNMYILDSQEIEIVWTVLPALILILIALPSLRILYLMDEINDPHLTIKAMGHQWYWSYEYTDYENLSFDSYMIPTQDLTPGQFRLLETDHRMVVPMESPIRILVSAEDVLHSWALPAMGVKMDAVPGRLNQTAFIASRPGVFYGQCSEICGANHSFMPIVVEAVPLSHFENWSTLMLKDA.

The Mitochondrial intermembrane portion of the chain corresponds to Met1–Ser14. A helical membrane pass occupies residues Pro15–Thr45. Residues Val46–Gln59 lie on the Mitochondrial matrix side of the membrane. Residues Glu60–Met87 form a helical membrane-spanning segment. At Asp88 to Ala230 the chain is on the mitochondrial intermembrane side. Residues His161, Cys196, Glu198, Cys200, His204, and Met207 each coordinate Cu cation. Glu198 serves as a coordination point for Mg(2+).

This sequence belongs to the cytochrome c oxidase subunit 2 family. Component of the cytochrome c oxidase (complex IV, CIV), a multisubunit enzyme composed of 14 subunits. The complex is composed of a catalytic core of 3 subunits MT-CO1, MT-CO2 and MT-CO3, encoded in the mitochondrial DNA, and 11 supernumerary subunits COX4I, COX5A, COX5B, COX6A, COX6B, COX6C, COX7A, COX7B, COX7C, COX8 and NDUFA4, which are encoded in the nuclear genome. The complex exists as a monomer or a dimer and forms supercomplexes (SCs) in the inner mitochondrial membrane with NADH-ubiquinone oxidoreductase (complex I, CI) and ubiquinol-cytochrome c oxidoreductase (cytochrome b-c1 complex, complex III, CIII), resulting in different assemblies (supercomplex SCI(1)III(2)IV(1) and megacomplex MCI(2)III(2)IV(2)). Found in a complex with TMEM177, COA6, COX18, COX20, SCO1 and SCO2. Interacts with TMEM177 in a COX20-dependent manner. Interacts with COX20. Interacts with COX16. Requires Cu cation as cofactor.

It localises to the mitochondrion inner membrane. The enzyme catalyses 4 Fe(II)-[cytochrome c] + O2 + 8 H(+)(in) = 4 Fe(III)-[cytochrome c] + 2 H2O + 4 H(+)(out). In terms of biological role, component of the cytochrome c oxidase, the last enzyme in the mitochondrial electron transport chain which drives oxidative phosphorylation. The respiratory chain contains 3 multisubunit complexes succinate dehydrogenase (complex II, CII), ubiquinol-cytochrome c oxidoreductase (cytochrome b-c1 complex, complex III, CIII) and cytochrome c oxidase (complex IV, CIV), that cooperate to transfer electrons derived from NADH and succinate to molecular oxygen, creating an electrochemical gradient over the inner membrane that drives transmembrane transport and the ATP synthase. Cytochrome c oxidase is the component of the respiratory chain that catalyzes the reduction of oxygen to water. Electrons originating from reduced cytochrome c in the intermembrane space (IMS) are transferred via the dinuclear copper A center (CU(A)) of subunit 2 and heme A of subunit 1 to the active site in subunit 1, a binuclear center (BNC) formed by heme A3 and copper B (CU(B)). The BNC reduces molecular oxygen to 2 water molecules using 4 electrons from cytochrome c in the IMS and 4 protons from the mitochondrial matrix. This is Cytochrome c oxidase subunit 2 (mt-co2) from Formosania lacustris (Oriental stream loach).